The primary structure comprises 339 residues: Type IV secretion system protein PtlH homolog (339 aa).

It belongs to the GSP E family.

In Bordetella bronchiseptica (strain ATCC BAA-588 / NCTC 13252 / RB50) (Alcaligenes bronchisepticus), this protein is Type IV secretion system protein PtlH homolog (ptlH).